We begin with the raw amino-acid sequence, 113 residues long: MVAAKKQKKTIESINSRLALVMKSGKYCLGYKQTLKTLRQGKAKLVIIAKNAPPLRKSEIEYYALLAKTGVHHYSGNNIELGTACGKYYRVCTLAITDPGDSDIITTLPESQV.

Belongs to the eukaryotic ribosomal protein eL30 family.

This is Large ribosomal subunit protein eL30 (RpL30) from Spodoptera frugiperda (Fall armyworm).